Consider the following 668-residue polypeptide: Break repair meiotic recombinase recruitment factor 1 (668 aa).

Disordered stretches follow at residues 1 to 142 (MTKR…AQSP), 155 to 333 (LQEA…GCSS), 349 to 465 (LEER…GGQN), 482 to 521 (VLEH…HSAD), and 642 to 668 (LGGK…WREL). Positions 114–125 (TRKEEMKDEDRG) are enriched in basic and acidic residues. Positions 166-180 (QADSARPEQSSQSPV) are enriched in polar residues. Residues 208–251 (SQDHLSEQGADDSKPETDRVPGDGGQKEHLPSIDSEGEKPDRGA) are compositionally biased toward basic and acidic residues. Residues 279 to 296 (TPASAPTSGPAPGLGPAS) are compositionally biased toward low complexity. Residues 305 to 316 (AQGSPDPQQTPS) show a composition bias toward polar residues. Serine 370 is modified (phosphoserine). The span at 391–400 (TGETTGESGE) shows a compositional bias: low complexity.

As to quaternary structure, interacts with HSF2BP (via N-terminus) and BRCA2; the interaction with HSF2BP is direct and allows the formation of a ternary complex. The complex BRME1:HSF2BP:BRCA2 interacts with SPATA22, MEIOB and RAD51.

The protein localises to the chromosome. Functionally, meiotic recombination factor component of recombination bridges involved in meiotic double-strand break repair. Modulates the localization of recombinases DMC1:RAD51 to meiotic double-strand break (DSB) sites through the interaction with and stabilization of the BRCA2:HSF2BP complex during meiotic recombination. Indispensable for the DSB repair, homologous synapsis, and crossover formation that are needed for progression past metaphase I, is essential for spermatogenesis and male fertility. In Homo sapiens (Human), this protein is Break repair meiotic recombinase recruitment factor 1.